The primary structure comprises 34 residues: Photosystem I reaction center subunit XII (34 aa).

A helical transmembrane segment spans residues 10-32 (IYIALVVAAHAAILALRLSVSLY).

This sequence belongs to the PsaM family.

It localises to the cellular thylakoid membrane. The protein is Photosystem I reaction center subunit XII of Synechococcus sp. (strain RCC307).